We begin with the raw amino-acid sequence, 214 residues long: Somatotropin-A (214 aa).

A signal peptide spans 1 to 25; sequence MATGFCSSFGLLVVLLLKNVADVGA. 2 disulfides stabilise this stretch: C77–C187 and C204–C212.

This sequence belongs to the somatotropin/prolactin family.

It localises to the secreted. Functionally, growth hormone plays an important role in growth control. This Xenopus laevis (African clawed frog) protein is Somatotropin-A (gh-a).